A 211-amino-acid chain; its full sequence is Uridine kinase (211 aa).

12–19 (GGSGSGKT) is an ATP binding site.

The protein belongs to the uridine kinase family.

It localises to the cytoplasm. The enzyme catalyses uridine + ATP = UMP + ADP + H(+). The catalysed reaction is cytidine + ATP = CMP + ADP + H(+). It participates in pyrimidine metabolism; CTP biosynthesis via salvage pathway; CTP from cytidine: step 1/3. Its pathway is pyrimidine metabolism; UMP biosynthesis via salvage pathway; UMP from uridine: step 1/1. The protein is Uridine kinase of Geobacillus kaustophilus (strain HTA426).